Reading from the N-terminus, the 457-residue chain is UDP-N-acetylmuramoyl-tripeptide--D-alanyl-D-alanine ligase (457 aa).

Residue 109-115 (GSSGKTT) coordinates ATP.

It belongs to the MurCDEF family. MurF subfamily.

The protein localises to the cytoplasm. The catalysed reaction is D-alanyl-D-alanine + UDP-N-acetyl-alpha-D-muramoyl-L-alanyl-gamma-D-glutamyl-meso-2,6-diaminopimelate + ATP = UDP-N-acetyl-alpha-D-muramoyl-L-alanyl-gamma-D-glutamyl-meso-2,6-diaminopimeloyl-D-alanyl-D-alanine + ADP + phosphate + H(+). It functions in the pathway cell wall biogenesis; peptidoglycan biosynthesis. Functionally, involved in cell wall formation. Catalyzes the final step in the synthesis of UDP-N-acetylmuramoyl-pentapeptide, the precursor of murein. This is UDP-N-acetylmuramoyl-tripeptide--D-alanyl-D-alanine ligase from Haemophilus influenzae (strain ATCC 51907 / DSM 11121 / KW20 / Rd).